The sequence spans 172 residues: Translationally-controlled tumor protein homolog (172 aa).

The TCTP domain maps to 1–172 (MRIYKDIITG…FKHGLEEEKF (172 aa)).

This sequence belongs to the TCTP family.

The protein localises to the cytoplasm. Its function is as follows. Involved in calcium binding and microtubule stabilization. This Lonomia obliqua (Moth) protein is Translationally-controlled tumor protein homolog (Tctp).